A 369-amino-acid polypeptide reads, in one-letter code: Queuine tRNA-ribosyltransferase (369 aa).

Residue D89 is the Proton acceptor of the active site. Substrate is bound by residues 89 to 93 (DSGGF), D142, Q184, and G211. The interval 242–248 (GGGSPEL) is RNA binding. The active-site Nucleophile is the D261. Positions 266 to 270 (TRIAR) are RNA binding; important for wobble base 34 recognition. Zn(2+) contacts are provided by C299, C301, C304, and H330.

Belongs to the queuine tRNA-ribosyltransferase family. As to quaternary structure, homodimer. Within each dimer, one monomer is responsible for RNA recognition and catalysis, while the other monomer binds to the replacement base PreQ1. It depends on Zn(2+) as a cofactor.

The catalysed reaction is 7-aminomethyl-7-carbaguanine + guanosine(34) in tRNA = 7-aminomethyl-7-carbaguanosine(34) in tRNA + guanine. Its pathway is tRNA modification; tRNA-queuosine biosynthesis. Its function is as follows. Catalyzes the base-exchange of a guanine (G) residue with the queuine precursor 7-aminomethyl-7-deazaguanine (PreQ1) at position 34 (anticodon wobble position) in tRNAs with GU(N) anticodons (tRNA-Asp, -Asn, -His and -Tyr). Catalysis occurs through a double-displacement mechanism. The nucleophile active site attacks the C1' of nucleotide 34 to detach the guanine base from the RNA, forming a covalent enzyme-RNA intermediate. The proton acceptor active site deprotonates the incoming PreQ1, allowing a nucleophilic attack on the C1' of the ribose to form the product. After dissociation, two additional enzymatic reactions on the tRNA convert PreQ1 to queuine (Q), resulting in the hypermodified nucleoside queuosine (7-(((4,5-cis-dihydroxy-2-cyclopenten-1-yl)amino)methyl)-7-deazaguanosine). The polypeptide is Queuine tRNA-ribosyltransferase (Thermotoga neapolitana (strain ATCC 49049 / DSM 4359 / NBRC 107923 / NS-E)).